The chain runs to 155 residues: Trypsin/factor XIIA inhibitor (155 aa).

A signal peptide spans 1–28; it reads MASSSSSSHRRLILAAAVLLSVLAAASA. 5 cysteine pairs are disulfide-bonded: cysteine 34–cysteine 83, cysteine 48–cysteine 72, cysteine 57–cysteine 114, cysteine 73–cysteine 132, and cysteine 85–cysteine 143. Residue arginine 62 is part of the active site. The propeptide at 139 to 155 is C-terminal peptide; the sequence is GVAECPWILGGGTMPSK.

The protein belongs to the protease inhibitor I6 (cereal trypsin/alpha-amylase inhibitor) family. Monomer.

It is found in the secreted. In terms of biological role, potent inhibitor of mammalian trypsin and a specific inhibitor of factor XIIa (activated hageman factor). The polypeptide is Trypsin/factor XIIA inhibitor (Zea mays (Maize)).